A 418-amino-acid polypeptide reads, in one-letter code: MNIFEELKARGLVFQTTDEEALVKALTEGQVSYYTGYDPTADSLHLGHLVAILTSRRLQLAGHKPYALVGGATGLIGDPSFKDAERILQTKETVLDWSQKIKEQLSCFLDFDNGENKAELVNNYDWFSQISFIDFLRDVGKHFTVNYMMSKDSVKKRIETGISYTEFAYQVMQGYDFYELNAKHNVTLQIGGSDQWGNMTAGTELLRKKADKTGHVMTVPLITDATGKKFGKSEGNAIWLDAKKTSPYEMYQFWLNVMDDDAVRFLKIFTFLSLDEIAAIEEQFNAARHERLAQKTLAREVVTLVHGEAAYQQALNITEQLFAGAIKNLSAAELKQGLSNVPNYQVQAEDSLNIVDMLVTAGISPSKRQAREDLQNGAIYLNGERLQDLDYSLSTADRIDNQLTVIRRGKKKYAVLTY.

Y34 contributes to the L-tyrosine binding site. The 'HIGH' region motif lies at 39-48 (PTADSLHLGH). Residues Y169 and Q173 each coordinate L-tyrosine. A 'KMSKS' region motif is present at residues 229–233 (KFGKS). K232 provides a ligand contact to ATP. The 67-residue stretch at 352-418 (LNIVDMLVTA…GKKKYAVLTY (67 aa)) folds into the S4 RNA-binding domain.

This sequence belongs to the class-I aminoacyl-tRNA synthetase family. TyrS type 1 subfamily. In terms of assembly, homodimer.

Its subcellular location is the cytoplasm. The enzyme catalyses tRNA(Tyr) + L-tyrosine + ATP = L-tyrosyl-tRNA(Tyr) + AMP + diphosphate + H(+). Catalyzes the attachment of tyrosine to tRNA(Tyr) in a two-step reaction: tyrosine is first activated by ATP to form Tyr-AMP and then transferred to the acceptor end of tRNA(Tyr). The protein is Tyrosine--tRNA ligase of Streptococcus equi subsp. zooepidemicus (strain MGCS10565).